Reading from the N-terminus, the 158-residue chain is Glutathione peroxidase homolog BsaA (158 aa).

The active site involves Thr-36.

This sequence belongs to the glutathione peroxidase family.

The protein is Glutathione peroxidase homolog BsaA (bsaA) of Staphylococcus epidermidis (strain ATCC 35984 / DSM 28319 / BCRC 17069 / CCUG 31568 / BM 3577 / RP62A).